The following is a 328-amino-acid chain: tRNA uridine(34) hydroxylase (328 aa).

The Rhodanese domain occupies 122–218 (QENRCLVLDV…YGLKMGTGKW (97 aa)). The active-site Cysteine persulfide intermediate is cysteine 178.

It belongs to the TrhO family.

It catalyses the reaction uridine(34) in tRNA + AH2 + O2 = 5-hydroxyuridine(34) in tRNA + A + H2O. Catalyzes oxygen-dependent 5-hydroxyuridine (ho5U) modification at position 34 in tRNAs. The chain is tRNA uridine(34) hydroxylase from Chlamydia muridarum (strain MoPn / Nigg).